A 104-amino-acid chain; its full sequence is Nucleoid-associated protein Amuc_1227 (104 aa).

Belongs to the YbaB/EbfC family. In terms of assembly, homodimer.

It localises to the cytoplasm. The protein localises to the nucleoid. Binds to DNA and alters its conformation. May be involved in regulation of gene expression, nucleoid organization and DNA protection. The polypeptide is Nucleoid-associated protein Amuc_1227 (Akkermansia muciniphila (strain ATCC BAA-835 / DSM 22959 / JCM 33894 / BCRC 81048 / CCUG 64013 / CIP 107961 / Muc)).